A 284-amino-acid chain; its full sequence is Bifunctional protein FolD (284 aa).

NADP(+) is bound by residues 165-167 (GRS), serine 190, and valine 231.

The protein belongs to the tetrahydrofolate dehydrogenase/cyclohydrolase family. In terms of assembly, homodimer.

The catalysed reaction is (6R)-5,10-methylene-5,6,7,8-tetrahydrofolate + NADP(+) = (6R)-5,10-methenyltetrahydrofolate + NADPH. The enzyme catalyses (6R)-5,10-methenyltetrahydrofolate + H2O = (6R)-10-formyltetrahydrofolate + H(+). The protein operates within one-carbon metabolism; tetrahydrofolate interconversion. Its function is as follows. Catalyzes the oxidation of 5,10-methylenetetrahydrofolate to 5,10-methenyltetrahydrofolate and then the hydrolysis of 5,10-methenyltetrahydrofolate to 10-formyltetrahydrofolate. In Natranaerobius thermophilus (strain ATCC BAA-1301 / DSM 18059 / JW/NM-WN-LF), this protein is Bifunctional protein FolD.